A 184-amino-acid polypeptide reads, in one-letter code: Peptide deformylase (184 aa).

2 residues coordinate Fe cation: cysteine 98 and histidine 140. Glutamate 141 is an active-site residue. Histidine 144 contacts Fe cation.

This sequence belongs to the polypeptide deformylase family. Fe(2+) serves as cofactor.

It catalyses the reaction N-terminal N-formyl-L-methionyl-[peptide] + H2O = N-terminal L-methionyl-[peptide] + formate. Functionally, removes the formyl group from the N-terminal Met of newly synthesized proteins. Requires at least a dipeptide for an efficient rate of reaction. N-terminal L-methionine is a prerequisite for activity but the enzyme has broad specificity at other positions. The chain is Peptide deformylase from Bacteroides thetaiotaomicron (strain ATCC 29148 / DSM 2079 / JCM 5827 / CCUG 10774 / NCTC 10582 / VPI-5482 / E50).